A 425-amino-acid chain; its full sequence is Spermatogenesis- and oogenesis-specific basic helix-loop-helix-containing protein 2 (425 aa).

In terms of domain architecture, bHLH spans 201 to 252; it reads KISLLHSSKEKLRRERIKYCCEQLRTLLPYVKGRKNDAASVLEATVDYVKYI.

Forms both hetero- and homodimers with SOHLH1.

It is found in the nucleus. It localises to the cytoplasm. In terms of biological role, transcription regulator of both male and female germline differentiation. Suppresses genes involved in spermatogonial stem cells maintenance, and induces genes important for spermatogonial differentiation. Coordinates oocyte differentiation without affecting meiosis I. The chain is Spermatogenesis- and oogenesis-specific basic helix-loop-helix-containing protein 2 (SOHLH2) from Homo sapiens (Human).